Here is a 197-residue protein sequence, read N- to C-terminus: Phosphoheptose isomerase (197 aa).

Residues 34 to 196 enclose the SIS domain; it reads MVQCLLGGNK…DRTLFPQDEQ (163 aa). Position 49 to 51 (49 to 51) interacts with substrate; that stretch reads NGG. Positions 58 and 62 each coordinate Zn(2+). Substrate is bound by residues glutamate 62, 91–92, 117–119, serine 122, and glutamine 172; these read ND and STS. Zn(2+) contacts are provided by glutamine 172 and histidine 180.

It belongs to the SIS family. GmhA subfamily. In terms of assembly, homotetramer. The cofactor is Zn(2+).

The protein resides in the cytoplasm. It carries out the reaction 2 D-sedoheptulose 7-phosphate = D-glycero-alpha-D-manno-heptose 7-phosphate + D-glycero-beta-D-manno-heptose 7-phosphate. It participates in carbohydrate biosynthesis; D-glycero-D-manno-heptose 7-phosphate biosynthesis; D-glycero-alpha-D-manno-heptose 7-phosphate and D-glycero-beta-D-manno-heptose 7-phosphate from sedoheptulose 7-phosphate: step 1/1. Its function is as follows. Catalyzes the isomerization of sedoheptulose 7-phosphate in D-glycero-D-manno-heptose 7-phosphate. This is Phosphoheptose isomerase from Shewanella oneidensis (strain ATCC 700550 / JCM 31522 / CIP 106686 / LMG 19005 / NCIMB 14063 / MR-1).